The sequence spans 341 residues: Tetraacyldisaccharide 4'-kinase (341 aa).

65–72 is a binding site for ATP; that stretch reads TVGGSGKT.

The protein belongs to the LpxK family.

It carries out the reaction a lipid A disaccharide + ATP = a lipid IVA + ADP + H(+). It functions in the pathway glycolipid biosynthesis; lipid IV(A) biosynthesis; lipid IV(A) from (3R)-3-hydroxytetradecanoyl-[acyl-carrier-protein] and UDP-N-acetyl-alpha-D-glucosamine: step 6/6. Its function is as follows. Transfers the gamma-phosphate of ATP to the 4'-position of a tetraacyldisaccharide 1-phosphate intermediate (termed DS-1-P) to form tetraacyldisaccharide 1,4'-bis-phosphate (lipid IVA). The protein is Tetraacyldisaccharide 4'-kinase of Shewanella woodyi (strain ATCC 51908 / MS32).